Here is a 396-residue protein sequence, read N- to C-terminus: Probable sugar efflux transporter (396 aa).

The next 12 helical transmembrane spans lie at 15 to 35 (VVTL…PVGL), 50 to 70 (VGIM…PFML), 81 to 101 (LICL…SWSF), 103 to 123 (VLVI…SITA), 136 to 156 (AQAL…GLPL), 170 to 190 (FFAI…LLPL), 209 to 229 (PALM…YTAY), 246 to 266 (FATA…VIFG), 275 to 295 (TLVS…LPAA), 299 to 319 (IHLG…GLGM), 333 to 353 (VAMA…ALVG), and 364 to 384 (MIGY…IIIF).

Belongs to the major facilitator superfamily. SotB (TC 2.A.1.2) family.

Its subcellular location is the cell inner membrane. Its function is as follows. Involved in the efflux of sugars. The physiological role may be the reduction of the intracellular concentration of toxic sugars or sugar metabolites. This chain is Probable sugar efflux transporter, found in Escherichia coli (strain SMS-3-5 / SECEC).